A 498-amino-acid polypeptide reads, in one-letter code: Lysine--tRNA ligase (498 aa).

Mg(2+) is bound by residues glutamate 407 and glutamate 414.

Belongs to the class-II aminoacyl-tRNA synthetase family. In terms of assembly, homodimer. The cofactor is Mg(2+).

It is found in the cytoplasm. The catalysed reaction is tRNA(Lys) + L-lysine + ATP = L-lysyl-tRNA(Lys) + AMP + diphosphate. The sequence is that of Lysine--tRNA ligase from Rhizobium etli (strain CIAT 652).